The chain runs to 616 residues: D-glutamate cyclase, mitochondrial (616 aa).

The transit peptide at 1-28 directs the protein to the mitochondrion; that stretch reads MPFTLHLRSRLPSAIRSLILQKKPNIRN.

The protein belongs to the D-glutamate cyclase family.

The protein localises to the mitochondrion matrix. The enzyme catalyses D-glutamate = 5-oxo-D-proline + H2O. Its function is as follows. D-glutamate cyclase that converts D-glutamate to 5-oxo-D-proline. This Homo sapiens (Human) protein is D-glutamate cyclase, mitochondrial.